A 514-amino-acid polypeptide reads, in one-letter code: Peptide chain release factor 3 (514 aa).

Residues 8-268 (KKRRTFAIIS…TFLEFAPEPH (261 aa)) form the tr-type G domain. GTP-binding positions include 17–24 (SHPDAGKT), 85–89 (DTPGH), and 139–142 (NKLD).

Belongs to the TRAFAC class translation factor GTPase superfamily. Classic translation factor GTPase family. PrfC subfamily.

It is found in the cytoplasm. Its function is as follows. Increases the formation of ribosomal termination complexes and stimulates activities of RF-1 and RF-2. It binds guanine nucleotides and has strong preference for UGA stop codons. It may interact directly with the ribosome. The stimulation of RF-1 and RF-2 is significantly reduced by GTP and GDP, but not by GMP. The chain is Peptide chain release factor 3 from Streptococcus pyogenes serotype M49 (strain NZ131).